Consider the following 134-residue polypeptide: ATP synthase epsilon chain (134 aa).

The segment at 100–134 (NQKLQNENLSEEEKEHYEKQRSRSQALLNLASAKV) is disordered. A compositionally biased stretch (basic and acidic residues) spans 110-120 (EEEKEHYEKQR).

It belongs to the ATPase epsilon chain family. In terms of assembly, F-type ATPases have 2 components, CF(1) - the catalytic core - and CF(0) - the membrane proton channel. CF(1) has five subunits: alpha(3), beta(3), gamma(1), delta(1), epsilon(1). CF(0) has three main subunits: a, b and c.

The protein localises to the cell inner membrane. In terms of biological role, produces ATP from ADP in the presence of a proton gradient across the membrane. The protein is ATP synthase epsilon chain of Sulfurihydrogenibium sp. (strain YO3AOP1).